Here is a 180-residue protein sequence, read N- to C-terminus: Zinc finger protein 740 (180 aa).

Positions 1 to 11 are enriched in polar residues; it reads MMLSQIASKQA. Residues 1–62 form a disordered region; that stretch reads MMLSQIASKQ…KEDDSLAEAS (62 aa). Lys-9 participates in a covalent cross-link: Glycyl lysine isopeptide (Lys-Gly) (interchain with G-Cter in SUMO2). Position 19 is a phosphoserine (Ser-19). Positions 31–56 are enriched in basic and acidic residues; sequence CKPRFDLSSKGHRKDSDKSRNRKEDD. C2H2-type zinc fingers lie at residues 88–110 and 116–138; these read FICE…VLIH and FECD…KRVH. The C2H2-type 3; atypical zinc finger occupies 144–166; that stretch reads YQCERCHQCFSRTDRLLRHKRMC.

It belongs to the krueppel C2H2-type zinc-finger protein family.

It localises to the nucleus. In terms of biological role, may be involved in transcriptional regulation. The polypeptide is Zinc finger protein 740 (Znf740) (Mus musculus (Mouse)).